Consider the following 317-residue polypeptide: COP9 signalosome complex subunit 6b (317 aa).

The MPN domain occupies 11–164 (FKLHPLVMLN…VTIYESEFHV (154 aa)).

This sequence belongs to the peptidase M67A family. CSN6 subfamily. In terms of assembly, component of the CSN complex, probably composed of CSN1, CSN2, CSN3, CSN4, CSN5 (CSN5A or CSN5B), CSN6 (CSN6A or CSN6B), CSN7 and CSN8. Interacts with itself. In the complex, it probably interacts directly with CSN4, CSN5A or CSN5B, and CSN7. Binds to the translation initiation factors TIF3E1.

The protein resides in the cytoplasm. It is found in the nucleus. Component of the COP9 signalosome complex (CSN), a complex involved in various cellular and developmental processes such as photomorphogenesis and auxin and jasmonate responses. The CSN complex is an essential regulator of the ubiquitin (Ubl) conjugation pathway by mediating the deneddylation of the cullin subunits of SCF-type E3 ligase complexes, leading to decrease the Ubl ligase activity of SCF. It is involved in repression of photomorphogenesis in darkness by regulating the activity of COP1-containing Ubl ligase complexes. The complex is also required for degradation of PSIAA6 by regulating the activity of the Ubl ligase SCF-TIR complex. Essential for the structural integrity of the CSN holocomplex. The protein is COP9 signalosome complex subunit 6b of Arabidopsis thaliana (Mouse-ear cress).